The chain runs to 77 residues: uncharacterized protein (77 aa).

This is an uncharacterized protein from Treponema pallidum (strain Nichols).